We begin with the raw amino-acid sequence, 226 residues long: Probable peroxiredoxin prdx-3 (226 aa).

In terms of domain architecture, Thioredoxin spans 33–191 (LGPKNTVPAF…TLRVLKAFQF (159 aa)). Cys78 serves as the catalytic Cysteine sulfenic acid (-SOH) intermediate.

Belongs to the peroxiredoxin family. AhpC/Prx1 subfamily. Homodimer; disulfide-linked, upon oxidation.

The enzyme catalyses a hydroperoxide + [thioredoxin]-dithiol = an alcohol + [thioredoxin]-disulfide + H2O. Thiol-specific peroxidase that catalyzes the reduction of hydrogen peroxide and organic hydroperoxides to water and alcohols, respectively. Plays a role in cell protection against oxidative stress by detoxifying peroxides and as sensor of hydrogen peroxide-mediated signaling events. The chain is Probable peroxiredoxin prdx-3 (prdx-3) from Caenorhabditis elegans.